A 202-amino-acid polypeptide reads, in one-letter code: Dephospho-CoA kinase (202 aa).

The region spanning 6–202 (KISVTGDPSS…QCFKALKGTI (197 aa)) is the DPCK domain. Residue 14–19 (SSGKTE) participates in ATP binding.

The protein belongs to the CoaE family.

The protein localises to the cytoplasm. It carries out the reaction 3'-dephospho-CoA + ATP = ADP + CoA + H(+). It functions in the pathway cofactor biosynthesis; coenzyme A biosynthesis; CoA from (R)-pantothenate: step 5/5. Catalyzes the phosphorylation of the 3'-hydroxyl group of dephosphocoenzyme A to form coenzyme A. In Chlamydia muridarum (strain MoPn / Nigg), this protein is Dephospho-CoA kinase.